Consider the following 200-residue polypeptide: NAD(P)H dehydrogenase (quinone) (200 aa).

The region spanning 4–191 is the Flavodoxin-like domain; that stretch reads VLVLYYSSYG…DIARYQGKHV (188 aa). FMN-binding positions include 10-15 and 79-81; these read SSYGHV and TRF. Residue Y12 coordinates NAD(+). Substrate is bound at residue W99. FMN contacts are provided by residues 114 to 120 and H135; that span reads STGTQHG.

Belongs to the WrbA family. It depends on FMN as a cofactor.

It catalyses the reaction a quinone + NADH + H(+) = a quinol + NAD(+). It carries out the reaction a quinone + NADPH + H(+) = a quinol + NADP(+). This Burkholderia cenocepacia (strain ATCC BAA-245 / DSM 16553 / LMG 16656 / NCTC 13227 / J2315 / CF5610) (Burkholderia cepacia (strain J2315)) protein is NAD(P)H dehydrogenase (quinone).